Consider the following 479-residue polypeptide: MGKLLVLMLVGMFLAFESLEALEYGDALNKSILFFEGQRSGKLPTNQRVKWRADSALSDGSLANVNLIGGYYDAGDNVKFVWPMSFTTTLLSWAAIEYQNEISSVNQLGYLRSTIKWGTDFILRAHTSPNMLYTQVGDGNSDHSCWERPEDMDTSRTLYSISSSSPGSEAAGEAAAALAAASLVFKSVDSTYSSTLLNHAKTLFEFADKYRGSYQASCPFYCSYSGYQDELLWAAAWLYKATGDKIYINYVISNKDWSQAVNEFSWDNKFVGAQALLVSEFYNGANDLAKFKSDVESFVCAMMPGSSSQQIKPTPGGLLFIRDSSNLQYVTTATTVLFHYSKTLTKAGVGSIQCGSTKFTVSQIRNFAKSQVDYILGNNPMKMSYMVGFGTKYPTQPHHRGSSLPSIQSKPEKIDCNGGYSYYNSDTPNPNVHIGAIVGGPNSSDQYSDKKSDYSHAEPTTYINAAFIGPVAALISSSG.

Positions 1–21 are cleaved as a signal peptide; it reads MGKLLVLMLVGMFLAFESLEA. N-linked (GlcNAc...) asparagine glycosylation occurs at Asn-29. Residue Asp-76 is the Nucleophile of the active site. Residue His-398 is part of the active site. An N-linked (GlcNAc...) asparagine glycan is attached at Asn-442. Active-site residues include Asp-449 and Glu-458.

This sequence belongs to the glycosyl hydrolase 9 (cellulase E) family.

It is found in the secreted. The catalysed reaction is Endohydrolysis of (1-&gt;4)-beta-D-glucosidic linkages in cellulose, lichenin and cereal beta-D-glucans.. This is Endoglucanase 20 from Arabidopsis thaliana (Mouse-ear cress).